The sequence spans 149 residues: D-aminoacyl-tRNA deacylase (149 aa).

The Gly-cisPro motif, important for rejection of L-amino acids motif lies at 137–138 (GP).

It belongs to the DTD family. Homodimer.

It localises to the cytoplasm. The catalysed reaction is glycyl-tRNA(Ala) + H2O = tRNA(Ala) + glycine + H(+). It catalyses the reaction a D-aminoacyl-tRNA + H2O = a tRNA + a D-alpha-amino acid + H(+). Its function is as follows. An aminoacyl-tRNA editing enzyme that deacylates mischarged D-aminoacyl-tRNAs. Also deacylates mischarged glycyl-tRNA(Ala), protecting cells against glycine mischarging by AlaRS. Acts via tRNA-based rather than protein-based catalysis; rejects L-amino acids rather than detecting D-amino acids in the active site. By recycling D-aminoacyl-tRNA to D-amino acids and free tRNA molecules, this enzyme counteracts the toxicity associated with the formation of D-aminoacyl-tRNA entities in vivo and helps enforce protein L-homochirality. This is D-aminoacyl-tRNA deacylase from Clostridium botulinum (strain ATCC 19397 / Type A).